The chain runs to 1553 residues: Probable serine/threonine-protein kinase qkgA (1553 aa).

Residues 113-142 (SSSSSSSSTSSSPSLTSSPSSPISTSPPYH) are disordered. 4 LRR repeats span residues 287-309 (NGTF…INMC), 311-333 (QLVE…TELK), 334-356 (FLKN…CNLT), and 357-378 (LLKV…IVEL). A Roc domain is found at 395 to 619 (SCETWNKVKL…KRLIHESEKS (225 aa)). Disordered stretches follow at residues 643-696 (NQGR…QQQQ), 955-1019 (ISNS…PSSQ), and 1048-1090 (NQNG…NNNK). Composition is skewed to low complexity over residues 648–675 (SISN…TSKK), 683–696 (SQQQ…QQQQ), 956–1018 (SNST…SPSS), and 1059–1090 (TTTT…NNNK). The COR domain maps to 694 to 893 (QQQLQQSIKE…KTYWKDGVLL (200 aa)). In terms of domain architecture, Protein kinase spans 1242-1546 (ILYERQIGEG…QTSYFDSPFL (305 aa)). Residues 1248–1256 (IGEGGFGLI) and K1271 contribute to the ATP site. D1393 functions as the Proton acceptor in the catalytic mechanism.

This sequence belongs to the protein kinase superfamily. TKL Ser/Thr protein kinase family. ROCO subfamily.

It carries out the reaction L-seryl-[protein] + ATP = O-phospho-L-seryl-[protein] + ADP + H(+). The enzyme catalyses L-threonyl-[protein] + ATP = O-phospho-L-threonyl-[protein] + ADP + H(+). Involved in growth, and during development, in aggregation. This Dictyostelium discoideum (Social amoeba) protein is Probable serine/threonine-protein kinase qkgA (qkgA-1).